The sequence spans 740 residues: Alpha-1,6-mannosylglycoprotein 6-beta-N-acetylglucosaminyltransferase A (740 aa).

The Cytoplasmic portion of the chain corresponds to methionine 1–lysine 13. The chain crosses the membrane as a helical; Signal-anchor for type II membrane protein span at residues leucine 14–leucine 30. The Lumenal portion of the chain corresponds to histidine 31–leucine 740. Asparagine 109, asparagine 114, and asparagine 117 each carry an N-linked (GlcNAc...) asparagine glycan. 9 disulfides stabilise this stretch: cysteine 144-cysteine 182, cysteine 155-cysteine 195, cysteine 171-cysteine 337, cysteine 371-cysteine 625, cysteine 648-cysteine 723, cysteine 652-cysteine 725, cysteine 659-cysteine 712, cysteine 680-cysteine 701, and cysteine 736-cysteine 739. Residues asparagine 212–leucine 740 form a sufficient for catalytic activity region. A glycan (N-linked (GlcNAc...) asparagine) is linked at asparagine 333. Aspartate 377–serine 378 contributes to the substrate binding site. N-linked (GlcNAc...) asparagine glycosylation is found at asparagine 432 and asparagine 446. Glutamate 525 is a UDP-N-acetyl-alpha-D-glucosamine binding site. A substrate-binding site is contributed by lysine 553.

The protein belongs to the glycosyltransferase 18 family. N-glycosylated. Post-translationally, a secreted form is released from the membrane after cleavage by gamma-secretase.

The protein resides in the golgi apparatus membrane. The protein localises to the secreted. The enzyme catalyses N(4)-{beta-D-GlcNAc-(1-&gt;2)-[beta-D-GlcNAc-(1-&gt;4)]-alpha-D-Man-(1-&gt;3)-[beta-D-GlcNAc-(1-&gt;2)-alpha-D-Man-(1-&gt;6)]-beta-D-Man-(1-&gt;4)-beta-D-GlcNAc-(1-&gt;4)-beta-D-GlcNAc}-L-asparaginyl-[protein] + UDP-N-acetyl-alpha-D-glucosamine = N(4)-{beta-D-GlcNAc-(1-&gt;2)-[beta-D-GlcNAc-(1-&gt;4)]-alpha-D-Man-(1-&gt;3)-[beta-D-GlcNAc-(1-&gt;2)-[beta-D-GlcNAc-(1-&gt;6)]-alpha-D-Man-(1-&gt;6)]-beta-D-Man-(1-&gt;4)-beta-D-GlcNAc-(1-&gt;4)-beta-D-GlcNAc}-L-asparaginyl-[protein] + UDP + H(+). Its pathway is protein modification; protein glycosylation. Functionally, catalyzes the addition of N-acetylglucosamine (GlcNAc) in beta 1-6 linkage to the alpha-linked mannose of biantennary N-linked oligosaccharides. Catalyzes an important step in the biosynthesis of branched, complex-type N-glycans, such as those found on EGFR, TGFR (TGF-beta receptor) and CDH2. Via its role in the biosynthesis of complex N-glycans, plays an important role in the activation of cellular signaling pathways, reorganization of the actin cytoskeleton, cell-cell adhesion and cell migration. MGAT5-dependent EGFR N-glycosylation enhances the interaction between EGFR and LGALS3 and thereby prevents rapid EGFR endocytosis and prolongs EGFR signaling. Required for efficient interaction between TGFB1 and its receptor. Enhances activation of intracellular signaling pathways by several types of growth factors, including FGF2, PDGF, IGF, TGFB1 and EGF. MGAT5-dependent CDH2 N-glycosylation inhibits CDH2-mediated homotypic cell-cell adhesion and contributes to the regulation of downstream signaling pathways. Promotes cell migration. Contributes to the regulation of the inflammatory response. MGAT5-dependent TCR N-glycosylation enhances the interaction between TCR and LGALS3, limits agonist-induced TCR clustering, and thereby dampens TCR-mediated responses to antigens. Required for normal leukocyte evasation and accumulation at sites of inflammation. Inhibits attachment of monocytes to the vascular endothelium and subsequent monocyte diapedesis. Promotes proliferation of umbilical vein endothelial cells and angiogenesis, at least in part by promoting the release of the growth factor FGF2 from the extracellular matrix. This chain is Alpha-1,6-mannosylglycoprotein 6-beta-N-acetylglucosaminyltransferase A (MGAT5), found in Cricetulus griseus (Chinese hamster).